A 278-amino-acid polypeptide reads, in one-letter code: Small ribosomal subunit protein uS9m (278 aa).

The N-terminal 10 residues, M1–R10, are a transit peptide targeting the mitochondrion. Residues V259 to R278 are disordered.

It belongs to the universal ribosomal protein uS9 family. In terms of assembly, component of the mitochondrial small ribosomal subunit (mt-SSU). Mature yeast 74S mitochondrial ribosomes consist of a small (37S) and a large (54S) subunit. The 37S small subunit contains a 15S ribosomal RNA (15S mt-rRNA) and 34 different proteins. The 54S large subunit contains a 21S rRNA (21S mt-rRNA) and 46 different proteins.

The protein resides in the mitochondrion. Its function is as follows. Component of the mitochondrial ribosome (mitoribosome), a dedicated translation machinery responsible for the synthesis of mitochondrial genome-encoded proteins, including at least some of the essential transmembrane subunits of the mitochondrial respiratory chain. The mitoribosomes are attached to the mitochondrial inner membrane and translation products are cotranslationally integrated into the membrane. The sequence is that of Small ribosomal subunit protein uS9m (MRPS9) from Saccharomyces cerevisiae (strain ATCC 204508 / S288c) (Baker's yeast).